The following is a 219-amino-acid chain: Histidinol-phosphate aminotransferase (219 aa).

The protein belongs to the class-II pyridoxal-phosphate-dependent aminotransferase family. Histidinol-phosphate aminotransferase subfamily. Homodimer. It depends on pyridoxal 5'-phosphate as a cofactor.

It catalyses the reaction L-histidinol phosphate + 2-oxoglutarate = 3-(imidazol-4-yl)-2-oxopropyl phosphate + L-glutamate. It functions in the pathway amino-acid biosynthesis; L-histidine biosynthesis; L-histidine from 5-phospho-alpha-D-ribose 1-diphosphate: step 7/9. The protein is Histidinol-phosphate aminotransferase (hisC) of Mycolicibacterium smegmatis (Mycobacterium smegmatis).